Reading from the N-terminus, the 736-residue chain is Subtilisin-like protease SBT4.12 (736 aa).

Positions 1 to 24 (MANLAASTCLYSWLLVLLLSSVSA) are cleaved as a signal peptide. Positions 25–110 (IIDEDTQVYI…VFPNKILQLH (86 aa)) are cleaved as a propeptide — activation peptide. The 79-residue stretch at 32–110 (VYIVYMGSLS…VFPNKILQLH (79 aa)) folds into the Inhibitor I9 domain. Residues 114-580 (SWDFMGVKEG…AGHVDPMAAL (467 aa)) form the Peptidase S8 domain. D142 acts as the Charge relay system in catalysis. N173 is a glycosylation site (N-linked (GlcNAc...) asparagine). The active-site Charge relay system is the H197. N220, N381, and N459 each carry an N-linked (GlcNAc...) asparagine glycan. The PA domain occupies 353–437 (KYPLVYGKSA…GLKAKDFKSL (85 aa)). The Charge relay system role is filled by S519. 3 N-linked (GlcNAc...) asparagine glycosylation sites follow: N601, N649, and N659.

It belongs to the peptidase S8 family. Post-translationally, the C-terminal propeptide is autocleaved. As to expression, specifically expressed in root stele of the root hair zone.

Its subcellular location is the secreted. This is Subtilisin-like protease SBT4.12 from Arabidopsis thaliana (Mouse-ear cress).